Reading from the N-terminus, the 476-residue chain is ATP sulfurylase 2 (476 aa).

A chloroplast-targeting transit peptide spans 1–56; that stretch reads MSLMIRSSYVSHITLFQPRNSKPSSFTNQISFLSSSNNNPFLNLVYKRNLTMQSVS.

Belongs to the sulfate adenylyltransferase family. In terms of assembly, homotetramer. Mostly expressed in leaves or cotyledons.

It is found in the plastid. It localises to the chloroplast. Its subcellular location is the cytoplasm. It carries out the reaction sulfate + ATP + H(+) = adenosine 5'-phosphosulfate + diphosphate. It functions in the pathway sulfur metabolism; hydrogen sulfide biosynthesis; sulfite from sulfate: step 1/3. The chain is ATP sulfurylase 2 (APS2) from Arabidopsis thaliana (Mouse-ear cress).